The primary structure comprises 139 residues: GPI-anchored protein 53 (139 aa).

Positions 1 to 17 (MKFQLLTLVSIATTTLA) are cleaved as a signal peptide. 2 stretches are compositionally biased toward low complexity: residues 57–69 (TITSSSSTTTTTT) and 77–101 (TSTTSASSTTTTSTKSNSTSPSSSS). Residues 57 to 115 (TITSSSSTTTTTTAKKDKKTTSTTSASSTTTTSTKSNSTSPSSSSSKKHKSETASITKT) form a disordered region. N-linked (GlcNAc...) asparagine glycosylation is present at Asn-93. Gly-116 carries GPI-anchor amidated glycine lipidation. The propeptide at 117–139 (GADSVAAAAAVGGPILAALALLL) is removed in mature form.

The protein resides in the cell membrane. This chain is GPI-anchored protein 53 (PGA53), found in Candida albicans (strain SC5314 / ATCC MYA-2876) (Yeast).